Here is a 644-residue protein sequence, read N- to C-terminus: ATP-dependent zinc metalloprotease FtsH (644 aa).

At Met-1–Asn-4 the chain is on the cytoplasmic side. Residues Leu-5–Ser-25 traverse the membrane as a helical segment. Residues Glu-26–Leu-98 lie on the Periplasmic side of the membrane. Residues Leu-99 to Phe-119 traverse the membrane as a helical segment. The Cytoplasmic segment spans residues Met-120–Lys-644. Gly-192–Thr-199 contributes to the ATP binding site. His-414 serves as a coordination point for Zn(2+). Residue Glu-415 is part of the active site. Zn(2+) contacts are provided by His-418 and Asp-492. Residues Val-598 to Lys-644 are disordered. Positions Asn-632–Lys-644 are enriched in polar residues.

In the central section; belongs to the AAA ATPase family. This sequence in the C-terminal section; belongs to the peptidase M41 family. As to quaternary structure, homohexamer. It depends on Zn(2+) as a cofactor.

The protein resides in the cell inner membrane. In terms of biological role, acts as a processive, ATP-dependent zinc metallopeptidase for both cytoplasmic and membrane proteins. Plays a role in the quality control of integral membrane proteins. The sequence is that of ATP-dependent zinc metalloprotease FtsH from Escherichia coli O157:H7.